Here is a 74-residue protein sequence, read N- to C-terminus: ATP synthase subunit 9, mitochondrial (74 aa).

2 consecutive transmembrane segments (helical) span residues 8–28 (MGAG…GNVF) and 50–70 (ILGF…AFLI).

It belongs to the ATPase C chain family. F-type ATPases have 2 components, CF(1) - the catalytic core - and CF(0) - the membrane proton channel. CF(1) has five subunits: alpha(3), beta(3), gamma(1), delta(1), epsilon(1). CF(0) has three main subunits: a, b and c.

Its subcellular location is the mitochondrion membrane. This protein is one of the chains of the nonenzymatic membrane component (F0) of mitochondrial ATPase. In Solanum lycopersicum (Tomato), this protein is ATP synthase subunit 9, mitochondrial (ATP9).